Reading from the N-terminus, the 637-residue chain is Chaperone protein HtpG (637 aa).

Residues methionine 1–arginine 345 are a; substrate-binding. A b region spans residues glutamate 346 to lysine 562. A c region spans residues leucine 563–lysine 637.

This sequence belongs to the heat shock protein 90 family. In terms of assembly, homodimer.

Its subcellular location is the cytoplasm. Its function is as follows. Molecular chaperone. Has ATPase activity. The protein is Chaperone protein HtpG of Shewanella sp. (strain MR-4).